The primary structure comprises 189 residues: Chitin synthase 1 (189 aa).

Belongs to the chitin synthase family.

It is found in the cell membrane. It carries out the reaction [(1-&gt;4)-N-acetyl-beta-D-glucosaminyl](n) + UDP-N-acetyl-alpha-D-glucosamine = [(1-&gt;4)-N-acetyl-beta-D-glucosaminyl](n+1) + UDP + H(+). Its function is as follows. Polymerizes chitin, a structural polymer of the cell wall and septum, by transferring the sugar moiety of UDP-GlcNAc to the non-reducing end of the growing chitin polymer. The polypeptide is Chitin synthase 1 (CHS1) (Exophiala exophialae (Black yeast-like fungus)).